Reading from the N-terminus, the 862-residue chain is Putative cargo-transport protein ypp1 (862 aa).

TPR repeat units lie at residues 342 to 377, 460 to 493, and 494 to 527; these read QQIF…KSHE, SFMY…QPTN, and TNAL…NPKY. Phosphoserine occurs at positions 632, 633, and 637. TPR repeat units lie at residues 665–698, 705–738, 740–772, and 814–847; these read ILGF…RRGK, QKLW…DHEC, WVYY…DPED, and PEAW…ADTN.

This sequence belongs to the YPP1 family.

The protein resides in the cytoplasm. Its function is as follows. Involved in endocytosis. The protein is Putative cargo-transport protein ypp1 (ypp1) of Schizosaccharomyces pombe (strain 972 / ATCC 24843) (Fission yeast).